The sequence spans 159 residues: Eukaryotic translation initiation factor 5A-2 (159 aa).

The segment covering 1–12 (MSDEEHQFESKA) has biased composition (basic and acidic residues). The interval 1–23 (MSDEEHQFESKADAGASKTYPQQ) is disordered. K52 bears the Hypusine mark.

Belongs to the eIF-5A family. Post-translationally, lys-52 undergoes hypusination, a unique post-translational modification that consists in the addition of a butylamino group from spermidine to lysine side chain, leading to the formation of the unusual amino acid hypusine. eIF-5As are the only known proteins to undergo this modification, which is essential for their function.

Its function is as follows. Translation factor that promotes translation elongation and termination, particularly upon ribosome stalling at specific amino acid sequence contexts. Binds between the exit (E) and peptidyl (P) site of the ribosome and promotes rescue of stalled ribosome: specifically required for efficient translation of polyproline-containing peptides as well as other motifs that stall the ribosome. Acts as a ribosome quality control (RQC) cofactor by joining the RQC complex to facilitate peptidyl transfer during CAT tailing step. This chain is Eukaryotic translation initiation factor 5A-2 (EIF-5A2), found in Nicotiana plumbaginifolia (Leadwort-leaved tobacco).